The sequence spans 79 residues: Conotoxin 8 (79 aa).

The N-terminal stretch at 1–22 (MKLTCVLIITVLFLTASQLITA) is a signal peptide. Positions 23–47 (DYSRGQRQYRAVRLGDEMRNFKGAR) are excised as a propeptide. 3 disulfide bridges follow: C49–C62, C56–C67, and C61–C77.

Belongs to the conotoxin O1 superfamily. Expressed by the venom duct.

The protein localises to the secreted. This is Conotoxin 8 from Conus vexillum (Flag cone).